Consider the following 522-residue polypeptide: Cyclic GMP-AMP synthase (522 aa).

The disordered stretch occupies residues 1–144 (MQPWHGKAMQ…PPGPWDVPSP (144 aa)). DNA-binding stretches follow at residues 1–160 (MQPW…DAAP) and 173–215 (KLSR…GSYY). N6-acetyllysine is present on Lys7. Residue Ser13 is modified to Phosphoserine. At Lys21 the chain carries N6-acetyllysine. Ser37 is modified (phosphoserine). Residues Lys47, Lys50, Lys56, Lys62, and Lys63 each carry the N6-acetyllysine modification. Residue Ser64 is modified to Phosphoserine. Residues 64–73 (SAPDTQERPP) are compositionally biased toward basic and acidic residues. A required for association with the cell membrane region spans residues 64-75 (SAPDTQERPPVR). Phosphothreonine is present on Thr68. N6-acetyllysine is present on residues Lys82 and Lys83. Residues 88 to 97 (AQDTQPSDAT) are compositionally biased toward polar residues. Thr91 is subject to Phosphothreonine. 3 positions are modified to phosphoserine: Ser98, Ser116, and Ser129. Low complexity predominate over residues 98 to 118 (SAPGAEGLEPPAAREPALSRA). Residues 120 to 160 (SCRQRGARCSTKPRPPPGPWDVPSPGLPVSAPILVRRDAAP) are required for activation upon DNA viral infection. An N6-lactoyllysine modification is found at Lys131. Over residues 132–144 (PRPPPGPWDVPSP) the composition is skewed to pro residues. A Phosphoserine modification is found at Ser143. The Nuclear export signal signature appears at 169–174 (LEKLKL). A Glycyl lysine isopeptide (Lys-Gly) (interchain with G-Cter in ubiquitin) cross-link involves residue Lys173. At Asp191 the chain carries PolyADP-ribosyl aspartic acid. Asn210 is modified ((Microbial infection) Deamidated asparagine; by herpes simplex virus 1/HHV-1 UL37). Residue Thr211 coordinates GTP. Residue Ser213 is modified to Phosphoserine. Ser213 lines the ATP pocket. Residue Tyr215 is modified to Phosphotyrosine; by BLK. Residues Glu225 and Asp227 each coordinate Mg(2+). 225-227 (EFD) is a binding site for ATP. Asp227 is a 2',3'-cGAMP binding site. Lys231 is covalently cross-linked (Glycyl lysine isopeptide (Lys-Gly) (interchain with G-Cter in SUMO)). Lys285 participates in a covalent cross-link: Glycyl lysine isopeptide (Lys-Gly) (interchain with G-Cter in ubiquitin). Glu286 carries the 5-glutamyl polyglutamate modification. The short motif at 295–305 (DVIMKRKRGGS) is the Nuclear localization signal element. The short motif at 299–302 (KRKR) is the KRKR-loop element. A Phosphoserine; by CDK1 and PKB modification is found at Ser305. Position 314 is a 5-glutamyl glutamate (Glu314). Asp319 contacts GTP. Residue Asp319 participates in Mg(2+) binding. Asp319 lines the 2',3'-cGAMP pocket. The tract at residues 341-382 (QNWLSAKVRKQLRLKPFYLVPKHAKEGNGFQEETWRLSFSHI) is interaction with collided ribosomes. Lys347 is covalently cross-linked (Glycyl lysine isopeptide (Lys-Gly) (interchain with G-Cter in SUMO); alternate). Residue Lys347 forms a Glycyl lysine isopeptide (Lys-Gly) (interchain with G-Cter in ubiquitin); alternate linkage. 2 residues coordinate 2',3'-cGAMP: Lys362 and Arg376. 376–383 (RLSFSHIE) provides a ligand contact to GTP. Position 380-383 (380-383 (SHIE)) interacts with ATP. N6-acetyllysine is present on Lys384. Residue Lys384 forms a Glycyl lysine isopeptide (Lys-Gly) (interchain with G-Cter in SUMO); alternate linkage. Residue Lys384 forms a Glycyl lysine isopeptide (Lys-Gly) (interchain with G-Cter in ubiquitin); alternate linkage. Residues 384 to 407 (KEILNNHGKSKTCCENKEEKCCRK) form a DNA-binding region. (Microbial infection) Deamidated asparagine; by herpes simplex virus 1/HHV-1 UL37 is present on Asn389. His390 provides a ligand contact to Zn(2+). N6-acetyllysine occurs at positions 392 and 394. Lys394 participates in a covalent cross-link: Glycyl lysine isopeptide (Lys-Gly) (interchain with G-Cter in SUMO). Zn(2+)-binding residues include Cys396, Cys397, and Cys404. 2 S-palmitoyl cysteine lipidation sites follow: Cys404 and Cys405. Glycyl lysine isopeptide (Lys-Gly) (interchain with G-Cter in ubiquitin) cross-links involve residues Lys411, Lys414, Lys427, and Lys428. Lys414 carries the post-translational modification N6-acetyllysine. Lys414 lines the ATP pocket. The KKH-loop signature appears at 427 to 429 (KKH). 2 positions are modified to phosphoserine: Ser434 and Ser435. 435-439 (SYHVK) provides a ligand contact to ATP. A (Microbial infection) Deamidated glutamine; by herpes simplex virus 1/HHV-1 UL37 mark is found at Gln451 and Gln454. Cys474 is lipidated: S-palmitoyl cysteine. A Glycyl lysine isopeptide (Lys-Gly) (interchain with G-Cter in SUMO); alternate cross-link involves residue Lys479. Lys479 is covalently cross-linked (Glycyl lysine isopeptide (Lys-Gly) (interchain with G-Cter in ubiquitin); alternate). At Lys506 the chain carries N6-methyllysine.

It belongs to the mab-21 family. In terms of assembly, monomer in the absence of DNA. Homodimer in presence of dsDNA: forms a 2:2 dimer with two enzymes binding to two DNA molecules. Interacts with nucleosomes; interaction is mainly mediated via histones H2A and H2B and inactivates the nucleotidyltransferase activity by blocking DNA-binding and subsequent activation. Interacts with PQBP1 (via WW domain). Interacts with TRIM14; this interaction recruits USP14, leading to deubiquitinate and stabilize CGAS and promote type I interferon production. Interacts with ZCCHC3; promoting sensing of dsDNA by CGAS. Interacts (when not monomethylated) with (poly-ADP-ribosylated) PARP1; interaction takes place in the nucleus and prevents the formation of the PARP1-TIMELESS complex. Interacts (when monomethylated) with SGF29; interaction with SGF29 prevents interaction with PARP1. Interacts with PCBP2; preventing the formation of liquid-like droplets in which CGAS is activated. Interacts with IRGM; promoting CGAS degradation. Interacts with DDX41. (Microbial infection) Interacts with herpes virus 8/HHV-8 protein ORF52; this interaction inhibits cGAS enzymatic activity by preventing the formation of liquid-like droplets by CGAS. As to quaternary structure, (Microbial infection) Interacts with herpes simplex virus 1 protein UL37; this interaction deaminates CGAS and inhibits its activation. In terms of assembly, (Microbial infection) Interacts with vaccinia virus protein OPG067; this interaction promotes CGAS proteasomal degradation. (Microbial infection) Interacts with cytomegalovirus protein UL31; this interaction promotes dissociation of DNA from CGAS, thereby inhibiting the enzymatic activity of CGAS. As to quaternary structure, (Microbial infection) Interacts with herpes simplex virus 1 tegument protein VP22 (UL49); this interaction inhibits cGAS enzymatic activity by preventing the formation of liquid-like droplets by CGAS. In terms of assembly, (Microbial infection) Interacts with herpesvirus 3 tegument protein VP22 (ORF9); this interaction inhibits cGAS enzymatic activity by preventing the formation of liquid-like droplets by CGAS. (Microbial infection) Interacts with human cytomegalovirus proteins UL42 and UL83; these interactions result in the inhibition of cGAS-STING signaling. The cofactor is Mg(2+). Requires Mn(2+) as cofactor. Zn(2+) serves as cofactor. Post-translationally, the N-terminal disordered part (1-160) is phosphorylated by AURKB during the G2-M transition, blocking CGAS liquid phase separation and preventing activation. Phosphorylation at Tyr-215 by BLK promotes cytosolic retention. Localizes into the nucleus following dephosphorylation at Tyr-215. Phosphorylation at Ser-435 activates the nucleotidyltransferase activity. Dephosphorylation at Ser-435 by PPP6C impairs its ability to bind GTP, thereby inactivating it. Phosphorylation at Thr-68 and Ser-213 by PRKDC inhibits its cyclic GMP-AMP synthase activity by impairing homodimerization and activation. Phosphorylation at Ser-305 by AKT (AKT1, AKT2 or AKT3) suppresses the nucleotidyltransferase activity. Phosphorylation at Ser-305 by CDK1 during mitosis leads to its inhibition, thereby preventing CGAS activation by self-DNA during mitosis. Dephosphorylated at Ser-305 by protein phosphatase PP1 upon mitotic exit. Ubiquitinated at Lys-414 via 'Lys-48'-linked polyubiquitin chains, leading to its SQSTM1-mediated autophagic degradation. Interaction with TRIM14 promotes recruitment of USP14, leading to deubiquitinate Lys-414 and stabilize CGAS. Ubiquitinated at Lys-173 and Lys-384 by RNF185 via 'Lys-27'-linked polyubiquitination, promoting CGAS cyclic GMP-AMP synthase activity. Monoubiquitination at Lys-347 by TRIM56 promotes oligomerization and subsequent activation. Monoubiquitination by TRIM41 promotes CGAS activation. Ubiquitination at Lys-285 and Lys-479 via 'Lys-48'-linked polyubiquitination promotes its degradation. Deubiquitination at Lys-285 by USP29 promotes its stabilization. Deubiquitinated by USP27X, promoting its stabilization. Ubiquitinated at Lys-411 via 'Lys-63'-linked polyubiquitin chains by MARCHF8, leading to the inhibition of its DNA binding ability. In cycling cells, nucleosome-bound CGAS is ubiquitinated at Lys-427 and Lys-428 via 'Lys-48'-linked polyubiquitin chains by the ECS(SPSB3) complex, leading to its degradation: ubiquitination and degradation of nuclear CGAS during G1 and G2 phases is required to promote low intranuclear CGAS abundance before the next mitotic cycle. In terms of processing, sumoylated at Lys-231 and Lys-479 by TRIM38 in uninfected cells and during the early phase of viral infection, promoting its stability by preventing ubiquitination at Lys-285 and Lys-479, and subsequent degradation. Desumoylated by SENP2 during the late phase of viral infection. Sumoylation at Lys-347, Lys-384 and Lys-394 prevents DNA-binding, oligomerization and nucleotidyltransferase activity. Desumoylation at Lys-347, Lys-384 and Lys-394 by SENP7 relieves inhibition and activates CGAS. Post-translationally, polyglutamylated by TTLL6 at Glu-286, leading to impair DNA-binding activity. Monoglutamylated at Glu-314 by TTLL4, leading to impair the nucleotidyltransferase activity. Deglutamylated by AGBL5/CCP5 and AGBL6/CCP6. Acetylation at Lys-384, Lys-394 and Lys-414 inhibits the cyclic GMP-AMP synthase activity. Deacetylated upon cytosolic DNA challenge such as viral infections. Acetylation can be mediated by aspirin (acetylsalicylate) drug, which directly acetylates CGAS. Acetylation by aspirin efficiently inhibits CGAS-mediated immune responses and is able to suppress self-DNA-induced autoimmunity. Acetylation at Lys-47, Lys-56, Lys-62 and Lys-83 by KAT5 increases the cyclic GMP-AMP synthase activity by promoting DNA-binding and subsequent activation. In terms of processing, proteolytically cleaved by apoptotic caspases during apoptosis, leading to its inactivation. The damage of the nucleus and the mitochondria during apoptosis leads to leakage of nuclear and mitochondrial DNA, which activate CGAS: cleavage and inactivation during apoptosis in required to prevent cytokine overproduction. Cleaved by CASP3 at Asp-319 during virus-induced apoptosis, thereby inactivating it and preventing cytokine overproduction. Cleaved by CASP1 at Asp-140 and Asp-157 upon DNA virus infection; the cleavage impairs cGAMP production. Also cleaved by the pyroptotic CASP4 and CASP5 during non-canonical inflammasome activation; they don't cut at the same sites than CASP1. Post-translationally, degraded via selective autophagy following interaction with IRGM. IRGM promotes CGAS recruitment to autophagosome membranes, promoting its SQSTM1/p62-dependent autophagic degradation. Poly-ADP-ribosylation at Asp-191 by PARP1 impairs DNA-binding, thereby preventing the cyclic GMP-AMP synthase activity. In terms of processing, palmitoylation at Cys-474 by ZDHHC18 impairs DNA-binding, thereby preventing the cyclic GMP-AMP synthase activity. Palmitoylation at Cys-404 and Cys-405 by ZDHHC9 promotes homodimerization and cyclic GMP-AMP synthase activity. Depalmitoylation at Cys-404 and Cys-405 by LYPLAL1 impairs homodimerization and cyclic GMP-AMP synthase activity. Post-translationally, monomethylated at Lys-506 by SETD7. Monomethylation promotes interaction with SGF29, preventing interaction between PARP1 nad SGF29. Demethylation by RIOX1 promotes interaction with PARP1, followed by PARP1 inactivation. Lactylation by AARS2 prevents ability to undergo liquid-liquid phase separation (LLPS), thereby inhibiting CGAS activation. In terms of processing, (Microbial infection) Deamidated on 'Asn-210' by herpes simplex virus 1 protein UL37. This modification significantly reduces CGAS-dependent cGAMP production and innate immune signaling induced by dsDNA. Post-translationally, (Microbial infection) Degraded by an autophagy-mediated mechanism in presence of Chikungunya virus capsid protein. In terms of tissue distribution, expressed in the monocytic cell line THP1.

It localises to the nucleus. Its subcellular location is the chromosome. The protein resides in the cell membrane. The protein localises to the cytoplasm. It is found in the cytosol. The catalysed reaction is GTP + ATP = 2',3'-cGAMP + 2 diphosphate. It catalyses the reaction GTP + ATP = pppGp(2'-5')A + diphosphate. It carries out the reaction pppGp(2'-5')A = 2',3'-cGAMP + diphosphate. The enzyme activity is strongly increased by double-stranded DNA (dsDNA), but not by single-stranded DNA or RNA. DNA-binding induces the formation of liquid-like droplets in which CGAS is activated. Liquid-like droplets also create a selective environment that restricts entry of negative regulators, such as TREX1 or BANF1/BAF, allowing sensing of DNA. A number of mechanisms exist to restrict its activity toward self-DNA. The nucleotidyltransferase activity is inhibited in the nucleus via its association with nucleosomes: interacts with the acidic patch of histones H2A and H2B, thereby blocking DNA-binding and subsequent activation. CGAS is also inactive when associated with mitotic chromatin. Chromatin-bound CGAS cannot be activated by exogenous DNA in mitotic cells: phosphorylation of the N-terminal disordered part by AURKB during the G2-M transition blocks CGAS liquid phase separation and activation. Activity toward self-DNA is inhibited by BANF1/BAF upon acute loss of nuclear membrane integrity: BANF1/BAF acts by outcompeting CGAS for DNA-binding, thereby preventing CGAS activation. DNA-induced activation at micronuclei is also limited by TREX1, which degrades micronuclear DNA upon nuclear envelope rupture, thereby preventing CGAS activation. CGAS can be released from nucleosomes and activated by MRE11 component of the MRN complex, which displaces CGAS from acidic-patch-mediated sequestration. Acetylation at Lys-384, Lys-394 and Lys-414 inhibits the cyclic GMP-AMP synthase activity. Inhibited by aspirin (acetylsalicylate) drug, which acetylates CGAS. Acetylation by KAT5 increases the cyclic GMP-AMP synthase activity by promoting DNA-binding and subsequent activation. Phosphorylation at Ser-305 suppresses the nucleotidyltransferase activity. Phosphorylation at Ser-435 promotes the cyclic GMP-AMP synthase activity. Phosphorylation at Thr-68 and Ser-213 inhibits its cyclic GMP-AMP synthase activity. Ubiquitination at Lys-173 and Lys-384 via 'Lys-27'-linked polyubiquitination enhances the cyclic GMP-AMP synthase activity. Monoubiquitination at Lys-347 promotes oligomerization and subsequent activation. Sumoylation at Lys-347, Lys-384 and Lys-394 prevents DNA-binding, oligomerization and nucleotidyltransferase activity. The enzyme activity is impaired by the cleavage at Asp-140 and Asp-157 produced by CASP1. In addition to DNA, also activated by collided ribosomes upon translation stress: specifically binds collided ribosomes, promoting its activation and triggering type-I interferon production. Strongly inhibited by compound PF-06928215, which is specific for human protein. Inhibited by small-molecule inhibitors with a pyridoindole tricyclic core G108, G140 and G150. Its activity is regulated as follows. (Microbial infection) Nucleotidyltransferase activity is inhibited by different herpesvirus tegument proteins (Herpes simplex virus 1 tegument protein VP22, herpes virus 8 protein ORF52 and herpesvirus 3 tegument protein VP22/ORF9). Viral tegument proteins act by disrupting liquid-like droplets in which CGAS is activated, thereby preventing CGAS activity. In terms of biological role, nucleotidyltransferase that catalyzes the formation of cyclic GMP-AMP (2',3'-cGAMP) from ATP and GTP and plays a key role in innate immunity. Catalysis involves both the formation of a 2',5' phosphodiester linkage at the GpA step and the formation of a 3',5' phosphodiester linkage at the ApG step, producing c[G(2',5')pA(3',5')p]. Acts as a key DNA sensor: directly binds double-stranded DNA (dsDNA), inducing the formation of liquid-like droplets in which CGAS is activated, leading to synthesis of 2',3'-cGAMP, a second messenger that binds to and activates STING1, thereby triggering type-I interferon production. Preferentially recognizes and binds curved long dsDNAs of a minimal length of 40 bp. Acts as a key foreign DNA sensor, the presence of double-stranded DNA (dsDNA) in the cytoplasm being a danger signal that triggers the immune responses. Has antiviral activity by sensing the presence of dsDNA from DNA viruses in the cytoplasm. Also acts as an innate immune sensor of infection by retroviruses, such as HIV-2, by detecting the presence of reverse-transcribed DNA in the cytosol. In contrast, HIV-1 is poorly sensed by CGAS, due to its capsid that cloaks viral DNA from CGAS detection. Detection of retroviral reverse-transcribed DNA in the cytosol may be indirect and be mediated via interaction with PQBP1, which directly binds reverse-transcribed retroviral DNA. Also detects the presence of DNA from bacteria, such as M.tuberculosis. 2',3'-cGAMP can be transferred from producing cells to neighboring cells through gap junctions, leading to promote STING1 activation and convey immune response to connecting cells. 2',3'-cGAMP can also be transferred between cells by virtue of packaging within viral particles contributing to IFN-induction in newly infected cells in a cGAS-independent but STING1-dependent manner. Also senses the presence of neutrophil extracellular traps (NETs) that are translocated to the cytosol following phagocytosis, leading to synthesis of 2',3'-cGAMP. In addition to foreign DNA, can also be activated by endogenous nuclear or mitochondrial DNA. When self-DNA leaks into the cytosol during cellular stress (such as mitochondrial stress, SARS-CoV-2 infection causing severe COVID-19 disease, DNA damage, mitotic arrest or senescence), or is present in form of cytosolic micronuclei, CGAS is activated leading to a state of sterile inflammation. Acts as a regulator of cellular senescence by binding to cytosolic chromatin fragments that are present in senescent cells, leading to trigger type-I interferon production via STING1 and promote cellular senescence. Also involved in the inflammatory response to genome instability and double-stranded DNA breaks: acts by localizing to micronuclei arising from genome instability. Micronuclei, which are frequently found in cancer cells, consist of chromatin surrounded by their own nuclear membrane: following breakdown of the micronuclear envelope, a process associated with chromothripsis, CGAS binds self-DNA exposed to the cytosol, leading to 2',3'-cGAMP synthesis and subsequent activation of STING1 and type-I interferon production. Activated in response to prolonged mitotic arrest, promoting mitotic cell death. In a healthy cell, CGAS is however kept inactive even in cellular events that directly expose it to self-DNA, such as mitosis, when cGAS associates with chromatin directly after nuclear envelope breakdown or remains in the form of postmitotic persistent nuclear cGAS pools bound to chromatin. Nuclear CGAS is inactivated by chromatin via direct interaction with nucleosomes, which block CGAS from DNA binding and thus prevent CGAS-induced autoimmunity. Also acts as a suppressor of DNA repair in response to DNA damage: inhibits homologous recombination repair by interacting with PARP1, the CGAS-PARP1 interaction leading to impede the formation of the PARP1-TIMELESS complex. In addition to DNA, also sense translation stress: in response to translation stress, translocates to the cytosol and associates with collided ribosomes, promoting its activation and triggering type-I interferon production. In contrast to other mammals, human CGAS displays species-specific mechanisms of DNA recognition and produces less 2',3'-cGAMP, allowing a more fine-tuned response to pathogens. The sequence is that of Cyclic GMP-AMP synthase from Homo sapiens (Human).